A 185-amino-acid polypeptide reads, in one-letter code: Elongation factor P (185 aa).

This sequence belongs to the elongation factor P family.

It localises to the cytoplasm. It participates in protein biosynthesis; polypeptide chain elongation. In terms of biological role, involved in peptide bond synthesis. Stimulates efficient translation and peptide-bond synthesis on native or reconstituted 70S ribosomes in vitro. Probably functions indirectly by altering the affinity of the ribosome for aminoacyl-tRNA, thus increasing their reactivity as acceptors for peptidyl transferase. The chain is Elongation factor P from Synechococcus sp. (strain JA-3-3Ab) (Cyanobacteria bacterium Yellowstone A-Prime).